The following is a 339-amino-acid chain: Anthranilate phosphoribosyltransferase (339 aa).

5-phospho-alpha-D-ribose 1-diphosphate is bound by residues G80, 83-84 (GD), T88, 90-93 (NIST), 108-116 (KHGNRAMSS), and S120. G80 lines the anthranilate pocket. S92 contributes to the Mg(2+) binding site. Anthranilate is bound at residue N111. R166 serves as a coordination point for anthranilate. Positions 225 and 226 each coordinate Mg(2+).

This sequence belongs to the anthranilate phosphoribosyltransferase family. Homodimer. Requires Mg(2+) as cofactor.

The enzyme catalyses N-(5-phospho-beta-D-ribosyl)anthranilate + diphosphate = 5-phospho-alpha-D-ribose 1-diphosphate + anthranilate. Its pathway is amino-acid biosynthesis; L-tryptophan biosynthesis; L-tryptophan from chorismate: step 2/5. Its function is as follows. Catalyzes the transfer of the phosphoribosyl group of 5-phosphorylribose-1-pyrophosphate (PRPP) to anthranilate to yield N-(5'-phosphoribosyl)-anthranilate (PRA). The protein is Anthranilate phosphoribosyltransferase of Chloroflexus aurantiacus (strain ATCC 29366 / DSM 635 / J-10-fl).